The primary structure comprises 216 residues: CRIB domain-containing protein RIC7 (216 aa).

Positions 36–49 (IGNPTDVKHVAHIG) constitute a CRIB domain. Residues 52-216 (GPSDNATAPS…PQFEDDRNGF (165 aa)) form a disordered region. Residues 108-121 (SSSEKGSPTKERSD) show a composition bias toward basic and acidic residues.

As to quaternary structure, interacts with ARAC4/ROP2 and ARAC11/ROP1. Expressed in roots, leaves, guard cells, stems, flowers, siliques and pollen.

It localises to the nucleus. It is found in the cytoplasm. The protein localises to the cell membrane. Functions as a downstream effector of Rho-related GTP binding proteins of the 'Rho of Plants' (ROPs) family. Participates in the propagation of ROP GTPase signals in specific cellular responses. Functions as a downstream effector of active ARAC4/ROP2 GTPase which is involved in the prevention of excessive stomatal opening upon light stimulation. Is involved in pollen tube growth regulation through its interaction with ARAC11/ROP1. This is CRIB domain-containing protein RIC7 (RIC7) from Arabidopsis thaliana (Mouse-ear cress).